The primary structure comprises 417 residues: Serine hydroxymethyltransferase (417 aa).

(6S)-5,6,7,8-tetrahydrofolate is bound by residues leucine 121 and 125-127 (GHL). Lysine 229 is modified (N6-(pyridoxal phosphate)lysine). Residue 355 to 357 (SPF) participates in (6S)-5,6,7,8-tetrahydrofolate binding.

Belongs to the SHMT family. As to quaternary structure, homodimer. The cofactor is pyridoxal 5'-phosphate.

It is found in the cytoplasm. It carries out the reaction (6R)-5,10-methylene-5,6,7,8-tetrahydrofolate + glycine + H2O = (6S)-5,6,7,8-tetrahydrofolate + L-serine. It functions in the pathway one-carbon metabolism; tetrahydrofolate interconversion. It participates in amino-acid biosynthesis; glycine biosynthesis; glycine from L-serine: step 1/1. Catalyzes the reversible interconversion of serine and glycine with tetrahydrofolate (THF) serving as the one-carbon carrier. This reaction serves as the major source of one-carbon groups required for the biosynthesis of purines, thymidylate, methionine, and other important biomolecules. Also exhibits THF-independent aldolase activity toward beta-hydroxyamino acids, producing glycine and aldehydes, via a retro-aldol mechanism. The sequence is that of Serine hydroxymethyltransferase from Yersinia pestis bv. Antiqua (strain Antiqua).